We begin with the raw amino-acid sequence, 463 residues long: MAGIVTEPWSVAENGNPSITAKGSSRELRLGRTAHNMSSSSLRKKSDLRVIQKVPYKGLKDFLSNLQEVILGTKLAILFPAIPAAIICTYCGVSQPWIFGLSLLGLTPLAERVSFLTEQLAFYTGPTLGGLLNATCGNATELIIAILALTNNKVAVVKYSLLGSILSNLLLVLGTSLFCGGIANIRREQRFDRKQADVNFFLLLLGFLCHLLPLLVGYLKNGEASAAVLSDMQLSISRGFSIVMLISYIAYLVFQLWTHRQLFDAQEQEDEYDDDVEQETAVISFWSGFAWLVGMTLVIALLSEYVVATIEEASDKWNLSVSFISIILLPIVGNAAEHAGAVIFAFKNKLDISLGVALGSATQIGLFVVPLTIIVAWILGINMDLNFGPLETGCLAVSIIITAFTLQDGSSHYMKGLVLLLCYFIIAICFFVDKLPQKQNAIHLGHQAMNNVVTATGGGVFSS.

Residue Ala-2 is modified to N-acetylalanine. Residues 2 to 68 are Cytoplasmic-facing; that stretch reads AGIVTEPWSV…LKDFLSNLQE (67 aa). The interval 25 to 33 is required for autoinhibitory regulation; sequence SRELRLGRT. The tract at residues 56–62 is required for interaction with autoinhibitory region; that stretch reads YKGLKDF. Residues 69 to 89 form a helical membrane-spanning segment; the sequence is VILGTKLAILFPAIPAAIICT. A required for Ca(2+)/H(+) exchange activity region spans residues 87 to 95; sequence ICTYCGVSQ. The Extracellular segment spans residues 90–96; it reads YCGVSQP. Residues 97–116 form a helical membrane-spanning segment; that stretch reads WIFGLSLLGLTPLAERVSFL. The Cytoplasmic segment spans residues 117–127; sequence TEQLAFYTGPT. Residues 128–148 form a helical membrane-spanning segment; it reads LGGLLNATCGNATELIIAILA. The cation selection stretch occupies residues 137-172; it reads GNATELIIAILALTNNKVAVVKYSLLGSILSNLLLV. Over 149 to 161 the chain is Extracellular; that stretch reads LTNNKVAVVKYSL. Residues 162 to 182 form a helical membrane-spanning segment; that stretch reads LGSILSNLLLVLGTSLFCGGI. Residues 183-197 are Cytoplasmic-facing; that stretch reads ANIRREQRFDRKQAD. A helical membrane pass occupies residues 198 to 218; it reads VNFFLLLLGFLCHLLPLLVGY. Residues 219–238 lie on the Extracellular side of the membrane; that stretch reads LKNGEASAAVLSDMQLSISR. The chain crosses the membrane as a helical span at residues 239 to 259; sequence GFSIVMLISYIAYLVFQLWTH. The Cytoplasmic portion of the chain corresponds to 260 to 281; that stretch reads RQLFDAQEQEDEYDDDVEQETA. Residues 282–302 form a helical membrane-spanning segment; that stretch reads VISFWSGFAWLVGMTLVIALL. Topologically, residues 303 to 325 are extracellular; it reads SEYVVATIEEASDKWNLSVSFIS. Asn-318 is a glycosylation site (N-linked (GlcNAc...) asparagine). Residues 326–346 form a helical membrane-spanning segment; that stretch reads IILLPIVGNAAEHAGAVIFAF. Residues 333 to 368 are cation selection; the sequence is GNAAEHAGAVIFAFKNKLDISLGVALGSATQIGLFV. At 347–360 the chain is on the cytoplasmic side; that stretch reads KNKLDISLGVALGS. A helical membrane pass occupies residues 361–381; it reads ATQIGLFVVPLTIIVAWILGI. The Extracellular segment spans residues 382–384; the sequence is NMD. Residues 385–405 form a helical membrane-spanning segment; sequence LNFGPLETGCLAVSIIITAFT. Residues 406-411 lie on the Cytoplasmic side of the membrane; the sequence is LQDGSS. A helical transmembrane segment spans residues 412–432; that stretch reads HYMKGLVLLLCYFIIAICFFV. Residues 433–463 are Extracellular-facing; the sequence is DKLPQKQNAIHLGHQAMNNVVTATGGGVFSS.

The protein belongs to the Ca(2+):cation antiporter (CaCA) (TC 2.A.19) family. Cation/proton exchanger (CAX) subfamily. In terms of assembly, interacts with GRXS14 and CXIP4. As to expression, expressed at low levels in leaves, stems and flowers.

The protein resides in the vacuole membrane. With respect to regulation, activated by monothiol glutaredoxin GRXS14 and CXIP4. Inhibited by excess of Ca(2+) and Cd(2+), Na(+) and K(+), but not Mn(2+). Vacuolar cation/proton exchanger (CAX). Translocates Ca(2+) and other metal ions into vacuoles using the proton gradient formed by H(+)-ATPase and H(+)-pyrophosphatase. Involved in ion homeostasis in association with CAX3. May play a role in cold-acclimation response. This chain is Vacuolar cation/proton exchanger 1 (CAX1), found in Arabidopsis thaliana (Mouse-ear cress).